We begin with the raw amino-acid sequence, 89 residues long: Small ribosomal subunit protein uS15 (89 aa).

Residues 1–21 (MSITAERKAEVIKDNARDKGD) show a composition bias toward basic and acidic residues. The disordered stretch occupies residues 1 to 26 (MSITAERKAEVIKDNARDKGDTGSPE).

This sequence belongs to the universal ribosomal protein uS15 family. Part of the 30S ribosomal subunit. Forms a bridge to the 50S subunit in the 70S ribosome, contacting the 23S rRNA.

One of the primary rRNA binding proteins, it binds directly to 16S rRNA where it helps nucleate assembly of the platform of the 30S subunit by binding and bridging several RNA helices of the 16S rRNA. Its function is as follows. Forms an intersubunit bridge (bridge B4) with the 23S rRNA of the 50S subunit in the ribosome. The sequence is that of Small ribosomal subunit protein uS15 from Sphingopyxis alaskensis (strain DSM 13593 / LMG 18877 / RB2256) (Sphingomonas alaskensis).